A 278-amino-acid chain; its full sequence is uncharacterized protein (278 aa).

This is an uncharacterized protein from Methanocaldococcus jannaschii (strain ATCC 43067 / DSM 2661 / JAL-1 / JCM 10045 / NBRC 100440) (Methanococcus jannaschii).